The following is a 419-amino-acid chain: Gamma-glutamyl phosphate reductase (419 aa).

Belongs to the gamma-glutamyl phosphate reductase family.

It is found in the cytoplasm. The catalysed reaction is L-glutamate 5-semialdehyde + phosphate + NADP(+) = L-glutamyl 5-phosphate + NADPH + H(+). It functions in the pathway amino-acid biosynthesis; L-proline biosynthesis; L-glutamate 5-semialdehyde from L-glutamate: step 2/2. Its function is as follows. Catalyzes the NADPH-dependent reduction of L-glutamate 5-phosphate into L-glutamate 5-semialdehyde and phosphate. The product spontaneously undergoes cyclization to form 1-pyrroline-5-carboxylate. The sequence is that of Gamma-glutamyl phosphate reductase from Syntrophomonas wolfei subsp. wolfei (strain DSM 2245B / Goettingen).